The following is a 397-amino-acid chain: MKYAVLIGDGMADYPIEELGSRTILQAARTPAMDSIAARGKTGLAKTVPEGFPPGSDVANMSIFGYDPAIYYSGRAPLEAASMGVALAADDVAFRCNLITIENGKIKDYSAGHISSDEAEILIDTLDSELRTEKVRFYPGISYRHLIVAGNDLGAETECTPPHDITGERKDDYLPRGKDGEFFSGLIEASTVVLELHPVNLKRVQEGKNPANSIWVWGQGYAPKFKTFQELYGKSGAIISAVDLLKGIGIYAGLDVIEVPGATGYLDTNYEGKASAAIEALKTRDLVFVHVEAPDEAGHEGSLEKKMKAIEDFDSRIVSPILKHAEASDETFTILVLPDHPTPISVKTHTRDPIPFAIYRTDAADPDGVEYFDEESVKNGSMGLVKASDLIGMLVKV.

It belongs to the BPG-independent phosphoglycerate mutase family. A-PGAM subfamily.

The enzyme catalyses (2R)-2-phosphoglycerate = (2R)-3-phosphoglycerate. Its pathway is carbohydrate degradation; glycolysis; pyruvate from D-glyceraldehyde 3-phosphate: step 3/5. Its function is as follows. Catalyzes the interconversion of 2-phosphoglycerate and 3-phosphoglycerate. In Methanosarcina acetivorans (strain ATCC 35395 / DSM 2834 / JCM 12185 / C2A), this protein is 2,3-bisphosphoglycerate-independent phosphoglycerate mutase.